The following is a 466-amino-acid chain: F-box/WD repeat-containing protein 15 (466 aa).

Positions Met1–Leu45 constitute an F-box domain. WD repeat units follow at residues Gly101 to Lys143, Glu146 to Thr185, Asn187 to Thr228, Leu339 to Gln379, and Cys381 to Cys419.

As to quaternary structure, part of an SCF (SKP1-CUL1-F-box protein) E3 ubiquitin-protein ligase complex. Interacts with KAT7 and SKP1. Specifically expressed in oocytes from follicles of the medullary region of the ovary.

Its subcellular location is the cytoplasm. It is found in the cytosol. It localises to the endoplasmic reticulum. The protein localises to the nucleus. Its pathway is protein modification; protein ubiquitination. In terms of biological role, substrate-recognition component of an SCF (SKP1-CUL1-F-box protein)-type E3 ubiquitin ligase complex. Promotes KAT7 ubiquitination and subsequent degradation in collaboration with MAP2K1 kinase, leading to reduced histone H3K14 acetylation and increased cell proliferation. The polypeptide is F-box/WD repeat-containing protein 15 (Mus musculus (Mouse)).